The following is a 259-amino-acid chain: MSMPFGYVSPEQQMRDKADYARKGIARGRSVVVLQYEHGILFVAPNPSRALHKISEIYDRIGFAAVGRYNEFEALRLGGIRYADINGYNYARDDVTARGLANLYAQNLGQIFTESMKPFEVEIVVAEVGDSSDEDHIYRLTFDGSVFDETGLVAMGGQAEAVAGRLKERYRDGLPLAEALEAALFALTEPGGERSPASQLEVAVLDRNRPHRKFLRLAGPRLERLLAEGSATSATSATPGEAEAPATAPEGDVDTGSNG.

A disordered region spans residues 226 to 259; it reads LAEGSATSATSATPGEAEAPATAPEGDVDTGSNG. The span at 227–250 shows a compositional bias: low complexity; sequence AEGSATSATSATPGEAEAPATAPE.

The protein belongs to the peptidase T1A family. The 20S proteasome core is composed of 14 alpha and 14 beta subunits that assemble into four stacked heptameric rings, resulting in a barrel-shaped structure. The two inner rings, each composed of seven catalytic beta subunits, are sandwiched by two outer rings, each composed of seven alpha subunits. The catalytic chamber with the active sites is on the inside of the barrel. Has a gated structure, the ends of the cylinder being occluded by the N-termini of the alpha-subunits. Is capped by the proteasome-associated ATPase, ARC.

Its subcellular location is the cytoplasm. Its pathway is protein degradation; proteasomal Pup-dependent pathway. Its activity is regulated as follows. The formation of the proteasomal ATPase ARC-20S proteasome complex, likely via the docking of the C-termini of ARC into the intersubunit pockets in the alpha-rings, may trigger opening of the gate for substrate entry. Interconversion between the open-gate and close-gate conformations leads to a dynamic regulation of the 20S proteasome proteolysis activity. Functionally, component of the proteasome core, a large protease complex with broad specificity involved in protein degradation. The polypeptide is Proteasome subunit alpha (Streptosporangium roseum (strain ATCC 12428 / DSM 43021 / JCM 3005 / KCTC 9067 / NCIMB 10171 / NRRL 2505 / NI 9100)).